The sequence spans 58 residues: Small ribosomal subunit protein bS21 (58 aa).

A disordered region spans residues 34–58 (KREHYESPSVRRKKKSEAARRRKRR). A compositionally biased stretch (basic residues) spans 43–58 (VRRKKKSEAARRRKRR).

The protein belongs to the bacterial ribosomal protein bS21 family.

The polypeptide is Small ribosomal subunit protein bS21 (Caldicellulosiruptor bescii (strain ATCC BAA-1888 / DSM 6725 / KCTC 15123 / Z-1320) (Anaerocellum thermophilum)).